Reading from the N-terminus, the 936-residue chain is MTDYKDTLNLPQTDFPMRANLPEREPQTLARWQTLDLYRKIRKDREGQPKFILHDGPPYANGRAHLGTAFNKTLKDIVVKSKTLSGFDAPFVPGWDCHGLPIELNVEKKLGKDKLSANAFRQACRDYAFSQIELQRDDFQRLGVLGDWQHPYLTMDFGYEADTVRALAKIVANGHLLRGQKPVHWCAACGSALAEAEVEYRDKASPAVDVGFEAVDAEAVRQRFGVKNATTRVLVPIWTTTPWTLPANEAVSVHPELHYALVKSELQNQPVYLILAKDLVDSAMQRYGVDDYEVHGNLKGDALEGMQLQHPFLDRIVPIILGEHVTTEAGTGNVHTAPAHGLEDYFVAEKYNLPINNPVDARGRFIPDTFLVGGQPVFKANEPIIVLLADSGHLLHSETIQHSYPHCWRHKTPLIFRATPQWFIGMNKNGLRERALAEIEKVTWLPAWGEARIGKMVADRPDWCISRQRLWGIPIPLFIHKKSGELHPKSPALMEKVAQLIEKESVDAWFDLDPKVLLGDDADHYEKVTDVLDVWFDSGVTHFCVLEKRRELKVPADIYLEGSDQHRGWFQSSLLTSLAIRDKAPYKSVLTYGFVVDSQGRKMSKSLGNVILPADVVKNLGADVLRLWAASMDYTVEVNVSDEILKRASDAYRRIRNTARFLLSNLYDFDPKKDKVAVDQLVALDRWAIFTTQKLQEKIITAYDRYRFPAIYQAIHNFCTVEMGSFYLDIIKDRLYTSKESGLPRRSAQTALYYIAEAFVRWIAPIISFTADEIWQFMPGDREPSVFLTQWFSDFPNAALSGEEEQRWQLLLQIRDEVNKALETYRNEGKIGSALTAEVVLYADERLNAAIATLGEELRFVLITSEASVLPFNEKSKAAFDTALPGLALEINVSEFEKCARCWQRRSSVGQIKEHADLCDRCVSNAFEDGDMRQFA.

Positions 58–68 (PYANGRAHLGT) match the 'HIGH' region motif. Glutamate 561 provides a ligand contact to L-isoleucyl-5'-AMP. A 'KMSKS' region motif is present at residues 602-606 (KMSKS). ATP is bound at residue lysine 605. Positions 899, 902, 919, and 922 each coordinate Zn(2+).

Belongs to the class-I aminoacyl-tRNA synthetase family. IleS type 1 subfamily. Monomer. Zn(2+) serves as cofactor.

The protein resides in the cytoplasm. It catalyses the reaction tRNA(Ile) + L-isoleucine + ATP = L-isoleucyl-tRNA(Ile) + AMP + diphosphate. In terms of biological role, catalyzes the attachment of isoleucine to tRNA(Ile). As IleRS can inadvertently accommodate and process structurally similar amino acids such as valine, to avoid such errors it has two additional distinct tRNA(Ile)-dependent editing activities. One activity is designated as 'pretransfer' editing and involves the hydrolysis of activated Val-AMP. The other activity is designated 'posttransfer' editing and involves deacylation of mischarged Val-tRNA(Ile). The sequence is that of Isoleucine--tRNA ligase from Coxiella burnetii (strain CbuG_Q212) (Coxiella burnetii (strain Q212)).